The following is a 444-amino-acid chain: ATP-dependent protease ATPase subunit HslU (444 aa).

Residues isoleucine 18, 60 to 65 (GVGKTE), aspartate 256, glutamate 322, and arginine 394 each bind ATP.

It belongs to the ClpX chaperone family. HslU subfamily. In terms of assembly, a double ring-shaped homohexamer of HslV is capped on each side by a ring-shaped HslU homohexamer. The assembly of the HslU/HslV complex is dependent on binding of ATP.

The protein resides in the cytoplasm. ATPase subunit of a proteasome-like degradation complex; this subunit has chaperone activity. The binding of ATP and its subsequent hydrolysis by HslU are essential for unfolding of protein substrates subsequently hydrolyzed by HslV. HslU recognizes the N-terminal part of its protein substrates and unfolds these before they are guided to HslV for hydrolysis. In Buchnera aphidicola subsp. Cinara cedri (strain Cc), this protein is ATP-dependent protease ATPase subunit HslU.